Consider the following 316-residue polypeptide: Glycine--tRNA ligase alpha subunit (316 aa).

The protein belongs to the class-II aminoacyl-tRNA synthetase family. In terms of assembly, tetramer of two alpha and two beta subunits.

Its subcellular location is the cytoplasm. It carries out the reaction tRNA(Gly) + glycine + ATP = glycyl-tRNA(Gly) + AMP + diphosphate. In Paracoccus denitrificans (strain Pd 1222), this protein is Glycine--tRNA ligase alpha subunit.